Consider the following 365-residue polypeptide: Prostaglandin E2 receptor EP3 subtype (365 aa).

At 1–30 the chain is on the extracellular side; that stretch reads MAGVWAPEHSVEAHSNQSSAADGCGSVSVA. An N-linked (GlcNAc...) asparagine glycan is attached at Asn-16. A helical membrane pass occupies residues 31–55; the sequence is FPITMMVTGFVGNALAMLLVVRSYR. Topologically, residues 56 to 68 are cytoplasmic; it reads RRESKRKKSFLLC. A helical transmembrane segment spans residues 69-89; that stretch reads IGWLALTDLVGQLLTSPVVIL. At 90-108 the chain is on the extracellular side; it reads VYLSQRRWEQLDPSGRLCT. A disulfide bridge links Cys-107 with Cys-184. A helical membrane pass occupies residues 109–130; the sequence is FFGLTMTVFGLSSLLVASAMAV. At 131–151 the chain is on the cytoplasmic side; that stretch reads ERALAIRAPHWYASHMKTRAT. A helical transmembrane segment spans residues 152–173; it reads PVLLGVWLSVLAFALLPVLGVG. The Extracellular segment spans residues 174–203; that stretch reads RYSVQWPGTWCFISTGPAGNETDSAREPGS. N-linked (GlcNAc...) asparagine glycosylation is present at Asn-193. A helical transmembrane segment spans residues 204-229; it reads VAFASAFACLGLLALVVTFACNLATI. Residues 230-259 lie on the Cytoplasmic side of the membrane; sequence KALVSRCRAKAAASQSSAQWGRITTETAIQ. A helical membrane pass occupies residues 260 to 283; the sequence is LMGIMCVLSVCWSPLLIMMLKMIF. Topologically, residues 284-303 are extracellular; the sequence is NQMSVEQCKTQMGKEKECNS. A helical membrane pass occupies residues 304-325; the sequence is FLIAVRLASLNQILDPWVYLLL. At 326 to 365 the chain is on the cytoplasmic side; it reads RKILLRKFCQIRDHTNYASSSTSLPCPGSSVLMWSDQLER.

It belongs to the G-protein coupled receptor 1 family. In terms of assembly, interacts (via C-terminus) with MKLN1. As to quaternary structure, does not interact with MKLN1. As to expression, principally expressed in the tubules of the renal medulla. Specific expression is seen in medullary and cortical thick ascending limbs; lower levels are detected in cortical and inner medullary collecting ducts. Not detected significantly in the glomeruli. In the brain, expressed in all types of glial cells.

It localises to the cell membrane. Receptor for prostaglandin E2 (PGE2). Required for normal development of fever in response to pyrinogens, including IL1B, prostaglandin E2 and bacterial lipopolysaccharide (LPS). Required for normal potentiation of platelet aggregation by prostaglandin E2, and thus plays a role in the regulation of blood coagulation. Required for increased HCO3(-) secretion in the duodenum in response to mucosal acidification, and thereby contributes to the protection of the mucosa against acid-induced ulceration. Not required for normal kidney function, normal urine volume and osmolality. Functionally, receptor for prostaglandin E2 (PGE2); ligand binding activates a signaling cascade via G(i) proteins that leads to the inhibition of adenylate cyclase. Its function is as follows. Receptor for prostaglandin E2 (PGE2); ligand binding can activate several distinct signaling cascades, resulting in activation or inhibition of adenylate cyclase. The protein is Prostaglandin E2 receptor EP3 subtype (Ptger3) of Rattus norvegicus (Rat).